Reading from the N-terminus, the 484-residue chain is Glycogen synthase 2 (484 aa).

Lysine 15 is an ADP-alpha-D-glucose binding site.

It belongs to the glycosyltransferase 1 family. Bacterial/plant glycogen synthase subfamily.

The enzyme catalyses [(1-&gt;4)-alpha-D-glucosyl](n) + ADP-alpha-D-glucose = [(1-&gt;4)-alpha-D-glucosyl](n+1) + ADP + H(+). The protein operates within glycan biosynthesis; glycogen biosynthesis. Synthesizes alpha-1,4-glucan chains using ADP-glucose. The protein is Glycogen synthase 2 of Geobacter metallireducens (strain ATCC 53774 / DSM 7210 / GS-15).